The sequence spans 90 residues: Small ribosomal subunit protein uS15c (90 aa).

Belongs to the universal ribosomal protein uS15 family. As to quaternary structure, part of the 30S ribosomal subunit.

The protein resides in the plastid. The protein localises to the chloroplast. In Nandina domestica (Heavenly bamboo), this protein is Small ribosomal subunit protein uS15c (rps15).